A 76-amino-acid polypeptide reads, in one-letter code: Exodeoxyribonuclease 7 small subunit (76 aa).

This sequence belongs to the XseB family. Heterooligomer composed of large and small subunits.

It is found in the cytoplasm. The catalysed reaction is Exonucleolytic cleavage in either 5'- to 3'- or 3'- to 5'-direction to yield nucleoside 5'-phosphates.. Bidirectionally degrades single-stranded DNA into large acid-insoluble oligonucleotides, which are then degraded further into small acid-soluble oligonucleotides. The polypeptide is Exodeoxyribonuclease 7 small subunit (Gluconacetobacter diazotrophicus (strain ATCC 49037 / DSM 5601 / CCUG 37298 / CIP 103539 / LMG 7603 / PAl5)).